The primary structure comprises 172 residues: Adenine phosphoribosyltransferase (172 aa).

Belongs to the purine/pyrimidine phosphoribosyltransferase family. Homodimer.

It localises to the cytoplasm. It catalyses the reaction AMP + diphosphate = 5-phospho-alpha-D-ribose 1-diphosphate + adenine. It participates in purine metabolism; AMP biosynthesis via salvage pathway; AMP from adenine: step 1/1. In terms of biological role, catalyzes a salvage reaction resulting in the formation of AMP, that is energically less costly than de novo synthesis. This is Adenine phosphoribosyltransferase from Roseiflexus castenholzii (strain DSM 13941 / HLO8).